The sequence spans 199 residues: Cell division protein SepF (199 aa).

Positions 15–79 (TEDGDETEVQ…PQPQQKSSTE (65 aa)) are disordered.

It belongs to the SepF family. Homodimer. Interacts with FtsZ.

It localises to the cytoplasm. Cell division protein that is part of the divisome complex and is recruited early to the Z-ring. Probably stimulates Z-ring formation, perhaps through the cross-linking of FtsZ protofilaments. Its function overlaps with FtsA. The sequence is that of Cell division protein SepF from Streptococcus sanguinis (strain SK36).